The primary structure comprises 123 residues: MPTIKQLIRNTRQPIRNVTKSPALRGCPQRRGTCTRVYTITPKKPNSALRKVARVRLTSGFEITAYIPGIGHNSQEHSVVLVRGGRVKDLPGVRYHIVRGTLDAVGVKDRQQGRSKYGVKKPK.

It belongs to the universal ribosomal protein uS12 family. Part of the 30S ribosomal subunit.

The protein localises to the plastid. The protein resides in the chloroplast. Functionally, with S4 and S5 plays an important role in translational accuracy. Located at the interface of the 30S and 50S subunits. This is Small ribosomal subunit protein uS12cz/uS12cy (rps12-A) from Daucus carota (Wild carrot).